Reading from the N-terminus, the 444-residue chain is Cysteine proteinase 2 (444 aa).

Positions 1 to 19 (MATSRAALCAVAVVCVVLA) form a signal peptide, or 27. A propeptide spans 20-124 (AACAPARAIH…HYRKARADLS (105 aa)) (activation peptide). An intrachain disulfide couples Cys147 to Cys188. Cys150 is an active-site residue. Asn228 is a glycosylation site (N-linked (GlcNAc...) asparagine). Residues His289 and Asn309 contribute to the active site. Residue Asn372 is glycosylated (N-linked (GlcNAc...) asparagine).

Belongs to the peptidase C1 family.

The protein localises to the lysosome. The cysteine proteinases have a potential role in host-parasite interaction and virulence. This is Cysteine proteinase 2 (CYS2) from Leishmania pifanoi.